Consider the following 232-residue polypeptide: Small ribosomal subunit protein uS3 (232 aa).

The 69-residue stretch at 39–107 (VRRFLEQRLK…PVHVNIEEVR (69 aa)) folds into the KH type-2 domain.

This sequence belongs to the universal ribosomal protein uS3 family. In terms of assembly, part of the 30S ribosomal subunit. Forms a tight complex with proteins S10 and S14.

In terms of biological role, binds the lower part of the 30S subunit head. Binds mRNA in the 70S ribosome, positioning it for translation. The chain is Small ribosomal subunit protein uS3 from Chromohalobacter salexigens (strain ATCC BAA-138 / DSM 3043 / CIP 106854 / NCIMB 13768 / 1H11).